A 211-amino-acid polypeptide reads, in one-letter code: Uridine kinase (211 aa).

Gly12–Thr19 contacts ATP.

It belongs to the uridine kinase family.

The protein resides in the cytoplasm. The enzyme catalyses uridine + ATP = UMP + ADP + H(+). The catalysed reaction is cytidine + ATP = CMP + ADP + H(+). Its pathway is pyrimidine metabolism; CTP biosynthesis via salvage pathway; CTP from cytidine: step 1/3. It functions in the pathway pyrimidine metabolism; UMP biosynthesis via salvage pathway; UMP from uridine: step 1/1. This chain is Uridine kinase, found in Geobacillus sp. (strain WCH70).